A 720-amino-acid chain; its full sequence is Phosphoribosylformylglycinamidine synthase subunit PurL (720 aa).

Residue histidine 34 is part of the active site. Tyrosine 37 contacts ATP. Position 83 (glutamate 83) interacts with Mg(2+). Substrate is bound by residues 84 to 87 (SHNH) and arginine 106. The active-site Proton acceptor is the histidine 85. Position 107 (aspartate 107) interacts with Mg(2+). Glutamine 231 lines the substrate pocket. Mg(2+) is bound at residue aspartate 259. 303-305 (ESQ) is a binding site for substrate. ATP-binding residues include aspartate 480 and glycine 517. Asparagine 518 contacts Mg(2+). Serine 520 provides a ligand contact to substrate.

Belongs to the FGAMS family. In terms of assembly, monomer. Part of the FGAM synthase complex composed of 1 PurL, 1 PurQ and 2 PurS subunits.

It is found in the cytoplasm. It catalyses the reaction N(2)-formyl-N(1)-(5-phospho-beta-D-ribosyl)glycinamide + L-glutamine + ATP + H2O = 2-formamido-N(1)-(5-O-phospho-beta-D-ribosyl)acetamidine + L-glutamate + ADP + phosphate + H(+). It functions in the pathway purine metabolism; IMP biosynthesis via de novo pathway; 5-amino-1-(5-phospho-D-ribosyl)imidazole from N(2)-formyl-N(1)-(5-phospho-D-ribosyl)glycinamide: step 1/2. Part of the phosphoribosylformylglycinamidine synthase complex involved in the purines biosynthetic pathway. Catalyzes the ATP-dependent conversion of formylglycinamide ribonucleotide (FGAR) and glutamine to yield formylglycinamidine ribonucleotide (FGAM) and glutamate. The FGAM synthase complex is composed of three subunits. PurQ produces an ammonia molecule by converting glutamine to glutamate. PurL transfers the ammonia molecule to FGAR to form FGAM in an ATP-dependent manner. PurS interacts with PurQ and PurL and is thought to assist in the transfer of the ammonia molecule from PurQ to PurL. This chain is Phosphoribosylformylglycinamidine synthase subunit PurL, found in Haloarcula marismortui (strain ATCC 43049 / DSM 3752 / JCM 8966 / VKM B-1809) (Halobacterium marismortui).